We begin with the raw amino-acid sequence, 864 residues long: Receptor like protein 24 (864 aa).

An N-terminal signal peptide occupies residues 1-29; the sequence is MKTVFKSLLLLHFLLLLLLCFVSPSSFFL. Residues 30–830 are Extracellular-facing; sequence LKVPVGGLVA…EEKGEVINWK (801 aa). N-linked (GlcNAc...) asparagine glycosylation is found at Asn61, Asn73, Asn94, and Asn112. 15 LRR repeats span residues 100–125, 127–148, 156–182, 183–205, 207–229, 230–253, 254–277, 279–303, 305–326, 327–350, 351–376, 378–398, 399–423, 425–448, and 449–472; these read FHQL…FCNL, KLKL…DLMG, LGKL…LFEL, HSLR…KFGN, NKLE…TISN, LTRI…VQNL, TKLS…LFTF, SLST…STSS, LEIM…ISKL, INLK…LLSP, LKSL…SYIP, SMES…ILKH, LQNL…LWTL, QLSF…VFVN, and LSVR…PLSI. Asn176, Asn194, Asn229, and Asn252 each carry an N-linked (GlcNAc...) asparagine glycan. Asn298 carries an N-linked (GlcNAc...) asparagine glycan. Residue Asn338 is glycosylated (N-linked (GlcNAc...) asparagine). 2 N-linked (GlcNAc...) asparagine glycosylation sites follow: Asn433 and Asn448. The stretch at 473–492 is one LRR 16; degenerate repeat; that stretch reads IGFSAIHNSFTGEIPLSICN. N-linked (GlcNAc...) asparagine glycosylation is found at Asn492 and Asn505. 10 LRR repeats span residues 493–514, 515–538, 539–562, 564–585, 586–610, 613–637, 688–712, 713–735, 736–760, and 762–785; these read RTSL…PQCL, SNFM…FYTD, SSLK…LLNC, SLRF…WLKA, LPNL…HQGP, FPEL…FFVN, LTSY…IGLL, KALI…SFAN, LMNL…LGSL, and FLVY…QITG. N-linked (GlcNAc...) asparagine glycosylation is present at Asn561. Residue Asn719 is glycosylated (N-linked (GlcNAc...) asparagine). The chain crosses the membrane as a helical span at residues 831–851; that stretch reads AVAIGYAPGLLFGLAIAHLIA. Topologically, residues 852–864 are cytoplasmic; that stretch reads SYKPEWLVKIIGF.

The protein belongs to the RLP family.

The protein localises to the cell membrane. The sequence is that of Receptor like protein 24 from Arabidopsis thaliana (Mouse-ear cress).